The chain runs to 204 residues: Small ribosomal subunit protein uS4 (204 aa).

The region spanning 93-156 (SRLSSVLYHS…AKIPILIEAE (64 aa)) is the S4 RNA-binding domain.

This sequence belongs to the universal ribosomal protein uS4 family. As to quaternary structure, part of the 30S ribosomal subunit. Contacts protein S5. The interaction surface between S4 and S5 is involved in control of translational fidelity.

In terms of biological role, one of the primary rRNA binding proteins, it binds directly to 16S rRNA where it nucleates assembly of the body of the 30S subunit. Its function is as follows. With S5 and S12 plays an important role in translational accuracy. This is Small ribosomal subunit protein uS4 from Wolbachia pipientis subsp. Culex pipiens (strain wPip).